A 471-amino-acid polypeptide reads, in one-letter code: UTP--glucose-1-phosphate uridylyltransferase (471 aa).

Residues 87–90 (LNGG), Lys-101, Gln-164, and Gly-193 each bind UTP. Residue 89–90 (GG) coordinates substrate. Residues His-194 and 222-224 (NSD) each bind substrate. The UTP site is built by Asp-224 and Lys-362.

This sequence belongs to the UDPGP type 1 family.

It localises to the cytoplasm. The catalysed reaction is alpha-D-glucose 1-phosphate + UTP + H(+) = UDP-alpha-D-glucose + diphosphate. Functionally, plays a central role as a glucosyl donor in cellular metabolic pathways. This is UTP--glucose-1-phosphate uridylyltransferase (UGP) from Astragalus penduliflorus (Mountain lentil).